Reading from the N-terminus, the 138-residue chain is Small ribosomal subunit protein uS12 (138 aa).

D89 is modified (3-methylthioaspartic acid). Residues 107–138 (VSGRMQRRSKYGAKFPKTGTGKTKAVPTKNKK) are disordered.

Belongs to the universal ribosomal protein uS12 family. Part of the 30S ribosomal subunit. Contacts proteins S8 and S17. May interact with IF1 in the 30S initiation complex.

Functionally, with S4 and S5 plays an important role in translational accuracy. In terms of biological role, interacts with and stabilizes bases of the 16S rRNA that are involved in tRNA selection in the A site and with the mRNA backbone. Located at the interface of the 30S and 50S subunits, it traverses the body of the 30S subunit contacting proteins on the other side and probably holding the rRNA structure together. The combined cluster of proteins S8, S12 and S17 appears to hold together the shoulder and platform of the 30S subunit. This Azobacteroides pseudotrichonymphae genomovar. CFP2 protein is Small ribosomal subunit protein uS12.